Consider the following 130-residue polypeptide: Large ribosomal subunit protein eL22 (130 aa).

Residues Met-1–Gln-21 form a disordered region. Residues Lys-17–Lys-20 carry the Nuclear localization signal motif.

It belongs to the eukaryotic ribosomal protein eL22 family.

The polypeptide is Large ribosomal subunit protein eL22 (RPL22) (Tripneustes gratilla (Hawaian sea urchin)).